A 147-amino-acid chain; its full sequence is NADH-quinone oxidoreductase subunit A (147 aa).

3 helical membrane passes run 16–36 (FAIF…GGWF), 68–88 (FYLV…LFAW), and 98–118 (VGFV…VYLV).

The protein belongs to the complex I subunit 3 family. In terms of assembly, NDH-1 is composed of 13 different subunits. Subunits NuoA, H, J, K, L, M, N constitute the membrane sector of the complex.

It is found in the cell inner membrane. It carries out the reaction a quinone + NADH + 5 H(+)(in) = a quinol + NAD(+) + 4 H(+)(out). Its function is as follows. NDH-1 shuttles electrons from NADH, via FMN and iron-sulfur (Fe-S) centers, to quinones in the respiratory chain. The immediate electron acceptor for the enzyme in this species is believed to be ubiquinone. Couples the redox reaction to proton translocation (for every two electrons transferred, four hydrogen ions are translocated across the cytoplasmic membrane), and thus conserves the redox energy in a proton gradient. The protein is NADH-quinone oxidoreductase subunit A of Citrobacter koseri (strain ATCC BAA-895 / CDC 4225-83 / SGSC4696).